A 199-amino-acid polypeptide reads, in one-letter code: Recombination protein RecR (199 aa).

The C4-type zinc-finger motif lies at 57–72 (CSICGNITEDDPCDIC). In terms of domain architecture, Toprim spans 80 to 176 (KAVLVVEDSK…KVTRLAHGLS (97 aa)).

This sequence belongs to the RecR family.

May play a role in DNA repair. It seems to be involved in an RecBC-independent recombinational process of DNA repair. It may act with RecF and RecO. The polypeptide is Recombination protein RecR (Pediococcus pentosaceus (strain ATCC 25745 / CCUG 21536 / LMG 10740 / 183-1w)).